A 479-amino-acid polypeptide reads, in one-letter code: Sucrose-6-phosphate hydrolase (479 aa).

Residues 1–28 (MTAHDQELRRRAYEEVEKKEPIANSDPH) are disordered. Substrate is bound by residues 40–43 (LLND), Gln59, 102–103 (YS), 161–162 (RD), and Glu220. The active site involves Asp43.

The protein belongs to the glycosyl hydrolase 32 family.

It carries out the reaction Hydrolysis of terminal non-reducing beta-D-fructofuranoside residues in beta-D-fructofuranosides.. It functions in the pathway glycan biosynthesis; sucrose metabolism. The polypeptide is Sucrose-6-phosphate hydrolase (sacA) (Bacillus subtilis (strain 168)).